Consider the following 298-residue polypeptide: MLVLSIRIKVWQTMESEITKRIVVPELEDILYKEHKVLDKGFVRLVDYMGSDESVVQAARISYGRGTKSVSQDAALINYLMRHSHTTPFEMCEIKFHIKLPIFVARQWVRHRTANVNEYSARYSVLDHEFYIPELDHVATQSEDNAQGRGNSLSNEDAQYVTDLLKRDSDMVYETYNKFLIKGVSREISRISLTLNYYTEWYWKIDLHNLLHFLRLRSDVHAQYEIRVYAETMLEIVKKWVPLTYAAFVEYCLESQSFSKSALSVVKKLIAGEDVAREDTGIGKREWRELMDVLADNK.

Residues 41-251 form the ThyX domain; it reads GFVRLVDYMG…PLTYAAFVEY (211 aa). Residues Thr-87, 110–112, and Glu-118 contribute to the FAD site; that span reads RHR. DUMP-binding positions include 107–110, 118–122, and Arg-190; these read QWVR and EYSAR. The ThyX motif motif lies at 110-120; it reads RHRTANVNEYS. FAD contacts are provided by residues 206-208 and His-212; that span reads DLH. A dUMP-binding site is contributed by Arg-217. Arg-217 functions as the Involved in ionization of N3 of dUMP, leading to its activation in the catalytic mechanism.

This sequence belongs to the thymidylate synthase ThyX family. In terms of assembly, homotetramer. FAD serves as cofactor.

The enzyme catalyses dUMP + (6R)-5,10-methylene-5,6,7,8-tetrahydrofolate + NADPH + H(+) = dTMP + (6S)-5,6,7,8-tetrahydrofolate + NADP(+). It participates in pyrimidine metabolism; dTTP biosynthesis. Its function is as follows. Catalyzes the reductive methylation of 2'-deoxyuridine-5'-monophosphate (dUMP) to 2'-deoxythymidine-5'-monophosphate (dTMP) while utilizing 5,10-methylenetetrahydrofolate (mTHF) as the methyl donor, and NADPH and FADH(2) as the reductant. The protein is Flavin-dependent thymidylate synthase of Ehrlichia ruminantium (strain Welgevonden).